The following is a 613-amino-acid chain: DNA mismatch repair protein MutL (613 aa).

The protein belongs to the DNA mismatch repair MutL/HexB family.

Its function is as follows. This protein is involved in the repair of mismatches in DNA. It is required for dam-dependent methyl-directed DNA mismatch repair. May act as a 'molecular matchmaker', a protein that promotes the formation of a stable complex between two or more DNA-binding proteins in an ATP-dependent manner without itself being part of a final effector complex. This is DNA mismatch repair protein MutL from Flavobacterium psychrophilum (strain ATCC 49511 / DSM 21280 / CIP 103535 / JIP02/86).